Reading from the N-terminus, the 192-residue chain is Glycerol-3-phosphate acyltransferase (192 aa).

5 helical membrane-spanning segments follow: residues 1–21, 51–71, 78–98, 112–132, and 155–175; these read MTSALVLLGYLAGSIPFGVLL, LGAVVLLLDAIKGALPVVLAV, PTVHVAVGLAAVLGHIYPVWL, VLLVLVPQAALAAALVYVAVF, and LTARAVEYAGLSALLFALMLW.

It belongs to the PlsY family. In terms of assembly, probably interacts with PlsX.

The protein resides in the cell inner membrane. It carries out the reaction an acyl phosphate + sn-glycerol 3-phosphate = a 1-acyl-sn-glycero-3-phosphate + phosphate. It functions in the pathway lipid metabolism; phospholipid metabolism. Catalyzes the transfer of an acyl group from acyl-phosphate (acyl-PO(4)) to glycerol-3-phosphate (G3P) to form lysophosphatidic acid (LPA). This enzyme utilizes acyl-phosphate as fatty acyl donor, but not acyl-CoA or acyl-ACP. The sequence is that of Glycerol-3-phosphate acyltransferase from Myxococcus xanthus (strain DK1622).